We begin with the raw amino-acid sequence, 180 residues long: Hypoxanthine-guanine phosphoribosyltransferase (180 aa).

K43 and G44 together coordinate diphosphate. Mg(2+) contacts are provided by E99 and D100. D103 functions as the Proton acceptor in the catalytic mechanism. GMP contacts are provided by residues K131, 152–153 (FI), and D159. R165 is a diphosphate binding site.

This sequence belongs to the purine/pyrimidine phosphoribosyltransferase family. It depends on Mg(2+) as a cofactor.

Its subcellular location is the cytoplasm. It carries out the reaction IMP + diphosphate = hypoxanthine + 5-phospho-alpha-D-ribose 1-diphosphate. It catalyses the reaction GMP + diphosphate = guanine + 5-phospho-alpha-D-ribose 1-diphosphate. It participates in purine metabolism; IMP biosynthesis via salvage pathway; IMP from hypoxanthine: step 1/1. It functions in the pathway purine metabolism; GMP biosynthesis via salvage pathway; GMP from guanine: step 1/1. Functionally, purine salvage pathway enzyme that catalyzes the transfer of the ribosyl-5-phosphate group from 5-phospho-alpha-D-ribose 1-diphosphate (PRPP) to the N9 position of the 6-oxopurines hypoxanthine and guanine to form the corresponding ribonucleotides IMP (inosine 5'-monophosphate) and GMP (guanosine 5'-monophosphate), with the release of PPi. This is Hypoxanthine-guanine phosphoribosyltransferase (hpt) from Streptococcus mutans serotype c (strain ATCC 700610 / UA159).